We begin with the raw amino-acid sequence, 236 residues long: Urease accessory protein UreF (236 aa).

The protein belongs to the UreF family. As to quaternary structure, ureD, UreF and UreG form a complex that acts as a GTP-hydrolysis-dependent molecular chaperone, activating the urease apoprotein by helping to assemble the nickel containing metallocenter of UreC. The UreE protein probably delivers the nickel.

The protein resides in the cytoplasm. Required for maturation of urease via the functional incorporation of the urease nickel metallocenter. This Granulibacter bethesdensis (strain ATCC BAA-1260 / CGDNIH1) protein is Urease accessory protein UreF.